The following is a 179-amino-acid chain: MTLKNRYKESIRPKLLKDLGLKNIHQVPKVVKVNVNRGLGEAASNSKALEASLNEMATITGQKALVTRAKKAIAGFKIREGMPIGCTVTLRGDRMYSFLERFINLALPRIRDFRGVNPKSFDGRGNYTVGVKEQLIFPEISFDKIDSIRGMDITIVTSAKSDQEGKALLQELGMPFSKN.

It belongs to the universal ribosomal protein uL5 family. Part of the 50S ribosomal subunit; part of the 5S rRNA/L5/L18/L25 subcomplex. Contacts the 5S rRNA and the P site tRNA. Forms a bridge to the 30S subunit in the 70S ribosome.

Its function is as follows. This is one of the proteins that bind and probably mediate the attachment of the 5S RNA into the large ribosomal subunit, where it forms part of the central protuberance. In the 70S ribosome it contacts protein S13 of the 30S subunit (bridge B1b), connecting the 2 subunits; this bridge is implicated in subunit movement. Contacts the P site tRNA; the 5S rRNA and some of its associated proteins might help stabilize positioning of ribosome-bound tRNAs. The sequence is that of Large ribosomal subunit protein uL5 from Prochlorococcus marinus (strain AS9601).